Here is a 321-residue protein sequence, read N- to C-terminus: Aspartate carbamoyltransferase catalytic subunit (321 aa).

R65 and T66 together coordinate carbamoyl phosphate. L-aspartate is bound at residue K93. Carbamoyl phosphate is bound by residues R115, H143, and Q146. L-aspartate contacts are provided by R176 and R230. Residues G271 and P272 each coordinate carbamoyl phosphate.

The protein belongs to the aspartate/ornithine carbamoyltransferase superfamily. ATCase family. As to quaternary structure, heterododecamer (2C3:3R2) of six catalytic PyrB chains organized as two trimers (C3), and six regulatory PyrI chains organized as three dimers (R2).

The catalysed reaction is carbamoyl phosphate + L-aspartate = N-carbamoyl-L-aspartate + phosphate + H(+). The protein operates within pyrimidine metabolism; UMP biosynthesis via de novo pathway; (S)-dihydroorotate from bicarbonate: step 2/3. Catalyzes the condensation of carbamoyl phosphate and aspartate to form carbamoyl aspartate and inorganic phosphate, the committed step in the de novo pyrimidine nucleotide biosynthesis pathway. The protein is Aspartate carbamoyltransferase catalytic subunit of Bartonella quintana (strain Toulouse) (Rochalimaea quintana).